The chain runs to 334 residues: tRNA-cytidine(32) 2-sulfurtransferase (334 aa).

Residues 74–79 (SGGKDS) carry the PP-loop motif motif. [4Fe-4S] cluster contacts are provided by cysteine 149, cysteine 152, and cysteine 240.

It belongs to the TtcA family. Homodimer. Mg(2+) serves as cofactor. Requires [4Fe-4S] cluster as cofactor.

It is found in the cytoplasm. It catalyses the reaction cytidine(32) in tRNA + S-sulfanyl-L-cysteinyl-[cysteine desulfurase] + AH2 + ATP = 2-thiocytidine(32) in tRNA + L-cysteinyl-[cysteine desulfurase] + A + AMP + diphosphate + H(+). It functions in the pathway tRNA modification. Catalyzes the ATP-dependent 2-thiolation of cytidine in position 32 of tRNA, to form 2-thiocytidine (s(2)C32). The sulfur atoms are provided by the cysteine/cysteine desulfurase (IscS) system. In Burkholderia ambifaria (strain ATCC BAA-244 / DSM 16087 / CCUG 44356 / LMG 19182 / AMMD) (Burkholderia cepacia (strain AMMD)), this protein is tRNA-cytidine(32) 2-sulfurtransferase.